Consider the following 403-residue polypeptide: Soluble calcium-activated nucleotidase 1 (403 aa).

Residues 1 to 44 (MPIQPFDQREWNEPMHSLRISVGGLPVLASMTKATDPRFRPRWR) are Cytoplasmic-facing. A helical; Signal-anchor for type II membrane protein transmembrane segment spans residues 45-61 (VILTSFVGAALLWLLYS). At 62 to 403 (HHQTPVSGRP…SVKYEGIEFI (342 aa)) the chain is on the lumenal side. Residue Asn90 is glycosylated (N-linked (GlcNAc...) asparagine). Residues Ser170, Asp171, Glu217, Glu286, Ser347, and Glu398 each contribute to the Ca(2+) site.

Belongs to the apyrase family. As to quaternary structure, monomer. Homodimer; dimerization is Ca(2+)-dependent. Requires Ca(2+) as cofactor. As to expression, detected in intestine, thymus, heart, lung, spleen, kidney, liver, testis, skeletal muscle and brain.

The protein resides in the endoplasmic reticulum membrane. The protein localises to the golgi apparatus. It localises to the golgi stack membrane. The catalysed reaction is a ribonucleoside 5'-diphosphate + H2O = a ribonucleoside 5'-phosphate + phosphate + H(+). Functionally, calcium-dependent nucleotidase with a preference for UDP. The order of activity with different substrates is UDP &gt; GDP &gt; IDP &gt;&gt; UTP &gt; CDP = GTP = ITP. Has very low activity towards ADP and even lower activity towards ATP. Does not hydrolyze AMP and GMP. Involved in proteoglycan synthesis. This is Soluble calcium-activated nucleotidase 1 (Cant1) from Rattus norvegicus (Rat).